A 579-amino-acid polypeptide reads, in one-letter code: Salivary alpha-glucosidase (579 aa).

An N-terminal signal peptide occupies residues 1 to 18 (MKIFVPLLSFLLAGLTTG). Positions 37, 39, 41, 43, 45, and 118 each coordinate Ca(2+). Asn-118 and Asn-151 each carry an N-linked (GlcNAc...) asparagine glycan. Asp-189 serves as a coordination point for Ca(2+). The Nucleophile role is filled by Asp-219. Ca(2+)-binding residues include Tyr-223, Leu-224, and Glu-226. An N-linked (GlcNAc...) asparagine glycan is attached at Asn-282. Glu-290 acts as the Proton donor in catalysis. Residues Asn-304, Asn-325, and Asn-401 are each glycosylated (N-linked (GlcNAc...) asparagine). Residue Asn-325 participates in N-acetyl-beta-D-glucosamine binding.

Belongs to the glycosyl hydrolase 13 family. As to expression, saliva (at protein level). Proximal lateral lobes of the salivary gland (at protein level).

It localises to the secreted. It catalyses the reaction Hydrolysis of terminal, non-reducing (1-&gt;4)-linked alpha-D-glucose residues with release of alpha-D-glucose.. Functionally, functions as a glucosidase that shows high activity toward sucrose, a major component of nectar. Assists the mosquito in its sugar-feeding capabilities. The protein is Salivary alpha-glucosidase of Aedes aegypti (Yellowfever mosquito).